Reading from the N-terminus, the 347-residue chain is Phenylalanine--tRNA ligase alpha subunit (347 aa).

Residue Glu265 participates in Mg(2+) binding.

This sequence belongs to the class-II aminoacyl-tRNA synthetase family. Phe-tRNA synthetase alpha subunit type 1 subfamily. As to quaternary structure, tetramer of two alpha and two beta subunits. Mg(2+) serves as cofactor.

The protein resides in the cytoplasm. It catalyses the reaction tRNA(Phe) + L-phenylalanine + ATP = L-phenylalanyl-tRNA(Phe) + AMP + diphosphate + H(+). This chain is Phenylalanine--tRNA ligase alpha subunit, found in Wolbachia pipientis wMel.